Here is a 172-residue protein sequence, read N- to C-terminus: Adenine phosphoribosyltransferase (172 aa).

The protein belongs to the purine/pyrimidine phosphoribosyltransferase family. As to quaternary structure, homodimer.

It localises to the cytoplasm. It carries out the reaction AMP + diphosphate = 5-phospho-alpha-D-ribose 1-diphosphate + adenine. It participates in purine metabolism; AMP biosynthesis via salvage pathway; AMP from adenine: step 1/1. Its function is as follows. Catalyzes a salvage reaction resulting in the formation of AMP, that is energically less costly than de novo synthesis. This Streptococcus thermophilus (strain ATCC BAA-250 / LMG 18311) protein is Adenine phosphoribosyltransferase.